The primary structure comprises 76 residues: Acyl carrier protein (76 aa).

A Carrier domain is found at 1-76 (MDTFESVKAV…DVVAYIEANK (76 aa)). Serine 36 carries the O-(pantetheine 4'-phosphoryl)serine modification.

It belongs to the acyl carrier protein (ACP) family. Post-translationally, 4'-phosphopantetheine is transferred from CoA to a specific serine of apo-ACP by AcpS. This modification is essential for activity because fatty acids are bound in thioester linkage to the sulfhydryl of the prosthetic group.

It localises to the cytoplasm. It functions in the pathway lipid metabolism; fatty acid biosynthesis. Carrier of the growing fatty acid chain in fatty acid biosynthesis. The protein is Acyl carrier protein of Helicobacter hepaticus (strain ATCC 51449 / 3B1).